The sequence spans 275 residues: Trans-aconitate 2-methyltransferase (275 aa).

This sequence belongs to the methyltransferase superfamily. Tam family.

Its subcellular location is the cytoplasm. The enzyme catalyses trans-aconitate + S-adenosyl-L-methionine = (E)-3-(methoxycarbonyl)pent-2-enedioate + S-adenosyl-L-homocysteine. Its function is as follows. Catalyzes the S-adenosylmethionine monomethyl esterification of trans-aconitate. The sequence is that of Trans-aconitate 2-methyltransferase from Pseudomonas aeruginosa (strain ATCC 15692 / DSM 22644 / CIP 104116 / JCM 14847 / LMG 12228 / 1C / PRS 101 / PAO1).